Consider the following 459-residue polypeptide: Putrescine aminotransferase (459 aa).

Residues 150–151 (GT) and Q274 each bind pyridoxal 5'-phosphate. K300 is subject to N6-(pyridoxal phosphate)lysine. T332 serves as a coordination point for pyridoxal 5'-phosphate.

Belongs to the class-III pyridoxal-phosphate-dependent aminotransferase family. Putrescine aminotransferase subfamily. Pyridoxal 5'-phosphate is required as a cofactor.

It catalyses the reaction an alkane-alpha,omega-diamine + 2-oxoglutarate = an omega-aminoaldehyde + L-glutamate. The catalysed reaction is putrescine + 2-oxoglutarate = 1-pyrroline + L-glutamate + H2O. The enzyme catalyses cadaverine + 2-oxoglutarate = 5-aminopentanal + L-glutamate. It participates in amine and polyamine degradation; putrescine degradation; 4-aminobutanal from putrescine (transaminase route): step 1/1. In terms of biological role, catalyzes the aminotransferase reaction from putrescine to 2-oxoglutarate, leading to glutamate and 4-aminobutanal, which spontaneously cyclizes to form 1-pyrroline. This is the first step in one of two pathways for putrescine degradation, where putrescine is converted into 4-aminobutanoate (gamma-aminobutyrate or GABA) via 4-aminobutanal. Also functions as a cadaverine transaminase in a a L-lysine degradation pathway to succinate that proceeds via cadaverine, glutarate and L-2-hydroxyglutarate. The sequence is that of Putrescine aminotransferase from Salmonella choleraesuis (strain SC-B67).